Here is a 216-residue protein sequence, read N- to C-terminus: Large ribosomal subunit protein uL1 (216 aa).

This sequence belongs to the universal ribosomal protein uL1 family. Part of the 50S ribosomal subunit.

In terms of biological role, binds directly to 23S rRNA. Probably involved in E site tRNA release. Protein L1 is also a translational repressor protein, it controls the translation of its operon by binding to its mRNA. This is Large ribosomal subunit protein uL1 from Thermococcus kodakarensis (strain ATCC BAA-918 / JCM 12380 / KOD1) (Pyrococcus kodakaraensis (strain KOD1)).